A 440-amino-acid polypeptide reads, in one-letter code: MLITNPALLGILASLAPLALGAPNQSTQARSRKCVIPSSYTSSQGTADDSPAVAGAFAQCAENSVIIFQEGVDYNIFHPIKATNLSNVEIRVLGNLHLPQDITAVQNIVKSGQNTWFTFQGPRVDWTGADDINNGWINSYGQAWWDANPANSSSFPNRPHLMSYKTSQASIKNFRSRKPIAWNVKLHGDDITVTHAIVDAKSTGGFPFNTDGFDVEGTNISITDSVMYNGDDAIAVNTPSHNIVFARNTIGYQSHGMSIGSLGKDPTDFANITNLRFEDVTVIDALYAARFKSWSGGKGLVKNVVWKNIRVFNVTFPIFVTQSYSDQSASRSGTIDPSSSVMMEDFTWSNFSGSINTYHPGDGSCVTNPCWYNAGLPNLKHTEAIVLECNTESSCKNFRTEGIRLYPQSKDSPSVICMKATAELNPKLGFECKNGTFVPQ.

The N-terminal stretch at 1-21 (MLITNPALLGILASLAPLALG) is a signal peptide. 4 N-linked (GlcNAc...) asparagine glycosylation sites follow: Asn24, Asn84, Asn151, and Asn219. 2 PbH1 repeats span residues 217-238 (GTNI…AVNT) and 240-261 (SHNI…SIGS). The active-site Proton donor is Asp231. The active site involves His255. Asn271 carries an N-linked (GlcNAc...) asparagine glycan. The stretch at 272-293 (ITNLRFEDVTVIDALYAARFKS) is one PbH1 3 repeat. Asn313 and Asn350 each carry an N-linked (GlcNAc...) asparagine glycan. The cysteines at positions 389 and 395 are disulfide-linked. Residue Asn434 is glycosylated (N-linked (GlcNAc...) asparagine).

Belongs to the glycosyl hydrolase 28 family.

Its subcellular location is the secreted. It carries out the reaction [(1-&gt;4)-alpha-D-galacturonosyl](n) + H2O = alpha-D-galacturonate + [(1-&gt;4)-alpha-D-galacturonosyl](n-1). Functionally, specific in hydrolyzing the terminal glycosidic bond of polygalacturonic acid and oligogalacturonates. The polypeptide is Probable exopolygalacturonase C (pgxC) (Neosartorya fischeri (strain ATCC 1020 / DSM 3700 / CBS 544.65 / FGSC A1164 / JCM 1740 / NRRL 181 / WB 181) (Aspergillus fischerianus)).